The sequence spans 435 residues: Probable E3 ubiquitin-protein ligase makorin-1 (435 aa).

2 consecutive C3H1-type zinc fingers follow at residues 18 to 45 and 48 to 75; these read WTKH…HDLT and KPAA…HCKP. The interval 81–109 is disordered; the sequence is LPAPQMLPLPSASLAGPSDPEPSGPTPVP. Positions 99-108 are enriched in pro residues; the sequence is DPEPSGPTPV. The C3H1-type 3 zinc finger occupies 155–182; it reads QLRKQLCPYAAVGECRYGINCAYLHGDV. Residues 183 to 210 form a makorin-type Cys-His region; sequence CYMCGLQVLHPTDNNQRSEHTKACIEAH. An RING-type zinc finger spans residues 228-282; sequence CGVCMEVVFEKANPSERRFGILSNCSHCYCLKCIRKWRSAKQFESKIIKSCPECR. The segment at 311–340 adopts a C3H1-type 4 zinc-finger fold; that stretch reads GMGSKPCRYFDEGRGTCPFGSNCFYKHAFP. The segment at 345 to 369 is disordered; sequence EEAQPQRRQTGSNSRNRNSRRTPLW.

In terms of tissue distribution, weakly expressed in adult brain, heart and kidney.

It carries out the reaction S-ubiquitinyl-[E2 ubiquitin-conjugating enzyme]-L-cysteine + [acceptor protein]-L-lysine = [E2 ubiquitin-conjugating enzyme]-L-cysteine + N(6)-ubiquitinyl-[acceptor protein]-L-lysine.. It functions in the pathway protein modification; protein ubiquitination. In terms of biological role, E3 ubiquitin ligase catalyzing the covalent attachment of ubiquitin moieties onto substrate proteins. In Seriola quinqueradiata (Five-ray yellowtail), this protein is Probable E3 ubiquitin-protein ligase makorin-1.